The primary structure comprises 201 residues: Reticulon-like protein B10 (201 aa).

Residues 14 to 201 enclose the Reticulon domain; that stretch reads VADLIMWKNR…KPTNKIKKMQ (188 aa). The next 3 membrane-spanning stretches (helical) occupy residues 25-45, 46-66, and 135-155; these read GGFL…KCGY, SFFP…FLWA, and FLNF…IPFL.

It localises to the endoplasmic reticulum membrane. In Arabidopsis thaliana (Mouse-ear cress), this protein is Reticulon-like protein B10 (RTNLB10).